A 50-amino-acid polypeptide reads, in one-letter code: Mast cell degranulating peptide (50 aa).

A signal peptide spans 1 to 27 (MISMLRCTFFFLSVILITSYFVTPTMS). Position 29 is an N6-formyllysine; partial (lysine 29). 2 disulfide bridges follow: cysteine 30-cysteine 42 and cysteine 32-cysteine 46. N6-formyllysine; partial is present on residues lysine 44 and lysine 48. An Asparagine amide modification is found at asparagine 49.

As to expression, expressed by the venom gland.

Its subcellular location is the secreted. Potent anti-inflammatory agent. At low concentrations, mediates the degranulation of mast cells thus evoking an inflammatory response. Also acts as a neurotoxin capable of blocking a class of voltage-gated potassium channels. This is Mast cell degranulating peptide from Apis mellifera (Honeybee).